The primary structure comprises 364 residues: tRNA 2-selenouridine synthase (364 aa).

The region spanning 14-137 is the Rhodanese domain; it reads LLADTPLIDV…LRQTAIQATW (124 aa). The active-site S-selanylcysteine intermediate is the Cys-97.

The protein belongs to the SelU family. In terms of assembly, monomer.

The catalysed reaction is 5-methylaminomethyl-2-thiouridine(34) in tRNA + selenophosphate + (2E)-geranyl diphosphate + H2O + H(+) = 5-methylaminomethyl-2-selenouridine(34) in tRNA + (2E)-thiogeraniol + phosphate + diphosphate. It catalyses the reaction 5-methylaminomethyl-2-thiouridine(34) in tRNA + (2E)-geranyl diphosphate = 5-methylaminomethyl-S-(2E)-geranyl-thiouridine(34) in tRNA + diphosphate. It carries out the reaction 5-methylaminomethyl-S-(2E)-geranyl-thiouridine(34) in tRNA + selenophosphate + H(+) = 5-methylaminomethyl-2-(Se-phospho)selenouridine(34) in tRNA + (2E)-thiogeraniol. The enzyme catalyses 5-methylaminomethyl-2-(Se-phospho)selenouridine(34) in tRNA + H2O = 5-methylaminomethyl-2-selenouridine(34) in tRNA + phosphate. Involved in the post-transcriptional modification of the uridine at the wobble position (U34) of tRNA(Lys), tRNA(Glu) and tRNA(Gln). Catalyzes the conversion of 2-thiouridine (S2U-RNA) to 2-selenouridine (Se2U-RNA). Acts in a two-step process involving geranylation of 2-thiouridine (S2U) to S-geranyl-2-thiouridine (geS2U) and subsequent selenation of the latter derivative to 2-selenouridine (Se2U) in the tRNA chain. The protein is tRNA 2-selenouridine synthase of Salmonella enteritidis.